We begin with the raw amino-acid sequence, 187 residues long: MTTAEKTLPRLKQRYREEIRESLQQQFGYANVMQIPGVVKVVVNMGVGDAARDAKLINGAVNDLALITGQKPEIRRARKSIAQFKLREGMPIGARVTLRGDRMWEFLDRLVAIALPRIRDFRGLNPKQFDGTGNYTFGLTEQSMFHEIDVDSIDRPRGMDITVVTSATTDDEGRALLRALGFPFKEN.

Belongs to the universal ribosomal protein uL5 family. Part of the 50S ribosomal subunit; part of the 5S rRNA/L5/L18/L25 subcomplex. Contacts the 5S rRNA and the P site tRNA. Forms a bridge to the 30S subunit in the 70S ribosome.

Its function is as follows. This is one of the proteins that bind and probably mediate the attachment of the 5S RNA into the large ribosomal subunit, where it forms part of the central protuberance. In the 70S ribosome it contacts protein S13 of the 30S subunit (bridge B1b), connecting the 2 subunits; this bridge is implicated in subunit movement. Contacts the P site tRNA; the 5S rRNA and some of its associated proteins might help stabilize positioning of ribosome-bound tRNAs. The chain is Large ribosomal subunit protein uL5 from Mycobacterium sp. (strain JLS).